Reading from the N-terminus, the 265-residue chain is Hydroxyethylthiazole kinase (265 aa).

Met-41 contacts substrate. ATP contacts are provided by Arg-117 and Ser-163. Substrate is bound at residue Gly-190.

The protein belongs to the Thz kinase family. Requires Mg(2+) as cofactor.

The enzyme catalyses 5-(2-hydroxyethyl)-4-methylthiazole + ATP = 4-methyl-5-(2-phosphooxyethyl)-thiazole + ADP + H(+). The protein operates within cofactor biosynthesis; thiamine diphosphate biosynthesis; 4-methyl-5-(2-phosphoethyl)-thiazole from 5-(2-hydroxyethyl)-4-methylthiazole: step 1/1. Its function is as follows. Catalyzes the phosphorylation of the hydroxyl group of 4-methyl-5-beta-hydroxyethylthiazole (THZ). The sequence is that of Hydroxyethylthiazole kinase from Pediococcus pentosaceus (strain ATCC 25745 / CCUG 21536 / LMG 10740 / 183-1w).